The primary structure comprises 1342 residues: DNA-directed RNA polymerase subunit beta (1342 aa).

Belongs to the RNA polymerase beta chain family. The RNAP catalytic core consists of 2 alpha, 1 beta, 1 beta' and 1 omega subunit. When a sigma factor is associated with the core the holoenzyme is formed, which can initiate transcription.

It catalyses the reaction RNA(n) + a ribonucleoside 5'-triphosphate = RNA(n+1) + diphosphate. In terms of biological role, DNA-dependent RNA polymerase catalyzes the transcription of DNA into RNA using the four ribonucleoside triphosphates as substrates. This is DNA-directed RNA polymerase subunit beta from Shewanella amazonensis (strain ATCC BAA-1098 / SB2B).